Consider the following 716-residue polypeptide: Beta-1,2-glucosyltransferase (716 aa).

10 residues coordinate sophorose: tyrosine 52, isoleucine 99, alanine 101, glutamate 102, asparagine 175, glutamate 176, glycine 278, tryptophan 279, glutamate 343, and arginine 349. The Proton donor/acceptor role is filled by glutamate 176. The beta-D-glucose site is built by glutamate 176, glycine 278, and tryptophan 279. Catalysis depends on glutamate 343, which acts as the Nucleophile. Beta-D-glucose is bound by residues arginine 349, lysine 358, and glutamate 361. Tyrosine 378 serves as a coordination point for sophorose. 2 residues coordinate beta-D-glucose: serine 708 and tyrosine 709.

Belongs to the glycosyl hydrolase 35 family. In terms of assembly, homidimer.

It localises to the cytoplasm. It catalyses the reaction a D-glucoside + [(1-&gt;2)-beta-D-glucosyl](n) = a beta-D-glucosyl-(1-&gt;2)-D-glucoside + [(1-&gt;2)-beta-D-glucosyl](n-1). Functionally, glycosyltransferase acting on beta-1,2-glucooligosaccharides. Catalyzes the transfer of a glucosyl residue from the non-reducing end of a 1,2-beta-D-glucan to a glucose residue of an acceptor molecule, forming a beta-1,2-glucosidic bond. The beta-1,2-linked glucose dimer sophorose is the preferred donor in vitro. Has a very broad specificity for the acceptor and can act on various aryl- and alkyl-glucosides. Does not show any hydrolytic activity. The chain is Beta-1,2-glucosyltransferase from Ignavibacterium album (strain DSM 19864 / JCM 16511 / NBRC 101810 / Mat9-16).